The chain runs to 189 residues: Phosphoheptose isomerase (189 aa).

One can recognise an SIS domain in the interval 34–189; that stretch reads AVETLKNGNK…CQIIDNELSH (156 aa). Residue 49–51 participates in substrate binding; the sequence is NGG. H58 and E62 together coordinate Zn(2+). Substrate contacts are provided by residues E62, 91-92, 117-119, S122, and Q169; these read ND and STS. Q169 and H177 together coordinate Zn(2+).

The protein belongs to the SIS family. GmhA subfamily. In terms of assembly, homotetramer. Zn(2+) is required as a cofactor.

The protein localises to the cytoplasm. The catalysed reaction is 2 D-sedoheptulose 7-phosphate = D-glycero-alpha-D-manno-heptose 7-phosphate + D-glycero-beta-D-manno-heptose 7-phosphate. It participates in carbohydrate biosynthesis; D-glycero-D-manno-heptose 7-phosphate biosynthesis; D-glycero-alpha-D-manno-heptose 7-phosphate and D-glycero-beta-D-manno-heptose 7-phosphate from sedoheptulose 7-phosphate: step 1/1. Its function is as follows. Catalyzes the isomerization of sedoheptulose 7-phosphate in D-glycero-D-manno-heptose 7-phosphate. The sequence is that of Phosphoheptose isomerase from Aliarcobacter butzleri (strain RM4018) (Arcobacter butzleri).